A 136-amino-acid polypeptide reads, in one-letter code: ATP synthase F(0) complex subunit C1, mitochondrial (136 aa).

The transit peptide at 1–61 (MQTAGALFIS…REFQTSVVSR (61 aa)) directs the protein to the mitochondrion. Residues 77–97 (VGVAGSGAGIGTVFGSLIIGY) form a helical membrane-spanning segment. Residue lysine 104 is modified to N6,N6,N6-trimethyllysine. The chain crosses the membrane as a helical span at residues 112-132 (ILGFALSEAMGLFCLMVAFLI).

This sequence belongs to the ATPase C chain family. In terms of assembly, homooctamer; the c-ring consists of eight c subunits forming a circle, and each subunit adopts a hairpin shape. Component of the ATP synthase complex composed at least of ATP5F1A/subunit alpha, ATP5F1B/subunit beta, ATP5MC1/subunit c (homooctomer), MT-ATP6/subunit a, MT-ATP8/subunit 8, ATP5ME/subunit e, ATP5MF/subunit f, ATP5MG/subunit g, ATP5MK/subunit k, ATP5MJ/subunit j, ATP5F1C/subunit gamma, ATP5F1D/subunit delta, ATP5F1E/subunit epsilon, ATP5PF/subunit F6, ATP5PB/subunit b, ATP5PD/subunit d, ATP5PO/subunit OSCP. ATP synthase complex consists of a soluble F(1) head domain (subunits alpha(3) and beta(3)) - the catalytic core - and a membrane F(0) domain - the membrane proton channel (subunits c, a, 8, e, f, g, k and j). These two domains are linked by a central stalk (subunits gamma, delta, and epsilon) rotating inside the F1 region and a stationary peripheral stalk (subunits F6, b, d, and OSCP). Interacts with TMEM70 (homooligomer form); this interaction facilitates the oligomer formation of subunit c/ATP5MC1 (c-ring) and the c-ring membrane insertion and also protects ATP5MC1 against intramitochondrial proteolysis. Trimethylated by ATPSCKMT at Lys-104. Methylation is required for proper incorporation of the C subunit into the ATP synthase complex and mitochondrial respiration.

It is found in the mitochondrion membrane. The catalysed reaction is H(+)(in) = H(+)(out). Subunit c, of the mitochondrial membrane ATP synthase complex (F(1)F(0) ATP synthase or Complex V) that produces ATP from ADP in the presence of a proton gradient across the membrane which is generated by electron transport complexes of the respiratory chain. ATP synthase complex consist of a soluble F(1) head domain - the catalytic core - and a membrane F(1) domain - the membrane proton channel. These two domains are linked by a central stalk rotating inside the F(1) region and a stationary peripheral stalk. During catalysis, ATP synthesis in the catalytic domain of F(1) is coupled via a rotary mechanism of the central stalk subunits to proton translocation. With the subunit a (MT-ATP6), forms the proton-conducting channel in the F(0) domain, that contains two crucial half-channels (inlet and outlet) that facilitate proton movement from the mitochondrial intermembrane space (IMS) into the matrix. Protons are taken up via the inlet half-channel and released through the outlet half-channel, following a Grotthuss mechanism. The polypeptide is ATP synthase F(0) complex subunit C1, mitochondrial (Homo sapiens (Human)).